The primary structure comprises 83 residues: Sec-independent protein translocase protein TatA (83 aa).

Residues 1-21 form a helical membrane-spanning segment; that stretch reads MGGLSLPHLIVLALVVLILFG. The interval 34–83 is disordered; it reads KGIKSFKQGMNDEDSKPVTPPPAQIPPASLQQTPPPAQPAPQPTSTDQAQ. Residues 66 to 75 are compositionally biased toward pro residues; sequence TPPPAQPAPQ.

It belongs to the TatA/E family. In terms of assembly, the Tat system comprises two distinct complexes: a TatABC complex, containing multiple copies of TatA, TatB and TatC subunits, and a separate TatA complex, containing only TatA subunits. Substrates initially bind to the TatABC complex, which probably triggers association of the separate TatA complex to form the active translocon.

It localises to the cell inner membrane. Functionally, part of the twin-arginine translocation (Tat) system that transports large folded proteins containing a characteristic twin-arginine motif in their signal peptide across membranes. TatA could form the protein-conducting channel of the Tat system. The chain is Sec-independent protein translocase protein TatA from Novosphingobium aromaticivorans (strain ATCC 700278 / DSM 12444 / CCUG 56034 / CIP 105152 / NBRC 16084 / F199).